We begin with the raw amino-acid sequence, 354 residues long: tRNA-specific 2-thiouridylase MnmA (354 aa).

Residues 6-13 (LLSGGVDS) and L33 each bind ATP. C100 acts as the Nucleophile in catalysis. Cysteines 100 and 195 form a disulfide. G123 contacts ATP. Residues 145-147 (KDQ) form an interaction with tRNA region. Residue C195 is the Cysteine persulfide intermediate of the active site.

This sequence belongs to the MnmA/TRMU family.

It localises to the cytoplasm. It catalyses the reaction S-sulfanyl-L-cysteinyl-[protein] + uridine(34) in tRNA + AH2 + ATP = 2-thiouridine(34) in tRNA + L-cysteinyl-[protein] + A + AMP + diphosphate + H(+). Catalyzes the 2-thiolation of uridine at the wobble position (U34) of tRNA, leading to the formation of s(2)U34. This chain is tRNA-specific 2-thiouridylase MnmA, found in Borrelia duttonii (strain Ly).